The sequence spans 155 residues: Microsomal glutathione S-transferase 1 (155 aa).

Topologically, residues 3–9 (DLRQLMD) are lumenal. The chain crosses the membrane as a helical span at residues 10–33 (NEVLMAFTSYATIILTKMMFMSSA). Topologically, residues 34–62 (TAFQRITNKVFANPEDCAGFGKGENAKKF) are cytoplasmic. Arg-38 provides a ligand contact to glutathione. Residues Lys-42, Lys-55, and Lys-60 each carry the N6-acetyllysine modification. Residues 63–96 (VRTDEKVERVRRAHLNDLENIVPFLGIGLLYSLS) traverse the membrane as a helical segment. The glutathione site is built by Arg-73, Arg-74, His-76, and Glu-81. At 97–99 (GPD) the chain is on the lumenal side. A helical membrane pass occupies residues 100–123 (LSTALMHFRIFVGARIYHTIAYLT). Tyr-121 provides a ligand contact to glutathione. Topologically, residues 124-128 (PLPQP) are cytoplasmic. A helical transmembrane segment spans residues 129–148 (NRGLAFFVGYGVTLSMAYRL). Residues 149–155 (LRSRLYL) are Lumenal-facing.

This sequence belongs to the MAPEG family. As to quaternary structure, homotrimer; The trimer binds only one molecule of glutathione. Post-translationally, acetylation of Lys-42 and Lys-55 is observed in liver mitochondria from fasted mice but not from fed mice. As to expression, expressed in the testes (at protein level).

Its subcellular location is the endoplasmic reticulum membrane. It is found in the mitochondrion outer membrane. It catalyses the reaction RX + glutathione = an S-substituted glutathione + a halide anion + H(+). Functionally, conjugation of reduced glutathione to a wide number of exogenous and endogenous hydrophobic electrophiles. This Mus musculus (Mouse) protein is Microsomal glutathione S-transferase 1 (Mgst1).